We begin with the raw amino-acid sequence, 295 residues long: UDP-N-acetylenolpyruvoylglucosamine reductase (295 aa).

Positions 27-194 (GVGGEAEVWF…TRVRLKLRRS (168 aa)) constitute an FAD-binding PCMH-type domain. Residue Arg174 is part of the active site. Cys221 functions as the Proton donor in the catalytic mechanism. Glu287 is an active-site residue.

This sequence belongs to the MurB family. FAD is required as a cofactor.

It is found in the cytoplasm. The catalysed reaction is UDP-N-acetyl-alpha-D-muramate + NADP(+) = UDP-N-acetyl-3-O-(1-carboxyvinyl)-alpha-D-glucosamine + NADPH + H(+). It functions in the pathway cell wall biogenesis; peptidoglycan biosynthesis. Cell wall formation. This chain is UDP-N-acetylenolpyruvoylglucosamine reductase, found in Deinococcus geothermalis (strain DSM 11300 / CIP 105573 / AG-3a).